We begin with the raw amino-acid sequence, 1368 residues long: DNA-directed RNA polymerase subunit beta (1368 aa).

This sequence belongs to the RNA polymerase beta chain family. As to quaternary structure, the RNAP catalytic core consists of 2 alpha, 1 beta, 1 beta' and 1 omega subunit. When a sigma factor is associated with the core the holoenzyme is formed, which can initiate transcription.

It catalyses the reaction RNA(n) + a ribonucleoside 5'-triphosphate = RNA(n+1) + diphosphate. Its function is as follows. DNA-dependent RNA polymerase catalyzes the transcription of DNA into RNA using the four ribonucleoside triphosphates as substrates. The chain is DNA-directed RNA polymerase subunit beta from Paraburkholderia phytofirmans (strain DSM 17436 / LMG 22146 / PsJN) (Burkholderia phytofirmans).